Consider the following 108-residue polypeptide: uncharacterized protein (108 aa).

The N-terminal stretch at 1 to 24 (MNLWEFRFGKSFLFIPNFIMKVLA) is a signal peptide.

It to M.jannaschii MJ0803.

This is an uncharacterized protein from Methanocaldococcus jannaschii (strain ATCC 43067 / DSM 2661 / JAL-1 / JCM 10045 / NBRC 100440) (Methanococcus jannaschii).